An 85-amino-acid chain; its full sequence is Conotoxin Cap15a (85 aa).

The N-terminal stretch at 1 to 23 (MEKLTFLILVATVLLTIHVLVQS) is a signal peptide. The propeptide occupies 24–49 (VGDKHLKRRPKQYATKHLSALMRGHR). The residue at position 50 (Gln-50) is a Pyrrolidone carboxylic acid.

This sequence belongs to the conotoxin O2 superfamily. Contains 4 disulfide bonds. In terms of tissue distribution, expressed by the venom duct.

The protein resides in the secreted. This chain is Conotoxin Cap15a, found in Conus capitaneus (Captain cone).